A 450-amino-acid polypeptide reads, in one-letter code: Protein indeterminate-domain 13 (450 aa).

The residue at position 54 (S54) is a Phosphoserine. 2 consecutive C2H2-type zinc fingers follow at residues 64–86 (FFCE…KRGH) and 106–136 (YICP…SRKH). The Nuclear localization signal motif lies at 128 to 135 (IKKHFSRK). The segment at 141–165 (WKCDKCSKKYAVISDWKAHNKICGS) adopts a C2H2-type 2; degenerate zinc-finger fold. Zn(2+) is bound by residues C143, C146, H159, C163, C170, C172, H185, and C189. The CCHC-type 2; atypical zinc finger occupies 168-191 (FRCDCGTLFSRKDSFISHRSFCDV). Positions 178–190 (RKDSFISHRSFCD) are SHR-binding. A compositionally biased stretch (polar residues) spans 248–263 (FGQKFTNSNPTQQQPN). The disordered stretch occupies residues 248-280 (FGQKFTNSNPTQQQPNALALSSPPSPRSTSDSV).

The protein localises to the nucleus. In terms of biological role, probable transcription factor. This is Protein indeterminate-domain 13 from Arabidopsis thaliana (Mouse-ear cress).